The sequence spans 703 residues: Harmonin-binding protein USHBP1 (703 aa).

Basic residues predominate over residues 1-15 (MSARATRPRSRRGRH). 2 disordered regions span residues 1–113 (MSAR…PPGN) and 138–172 (HQPPSHSGPMEFEGTSEGGAGSLGKQEGAGSCQRE). Residues 189 to 227 (SREDELVRTQASLEAIRAEKETLQKEVQELQDSLLRLEP) adopt a coiled-coil conformation. The disordered stretch occupies residues 228–256 (CPHLSHNQAGGSGSGSSSSEADREPWETQ). The stretch at 289–309 (EMHIMEAQMEQLRGSIEKLKC) forms a coiled coil. A disordered region spans residues 396-416 (MDAGAQQNPQPSPEGSSVDKP). Positions 400–410 (AQQNPQPSPEG) are enriched in polar residues. Residues 476–513 (RLEKTQIQQDLVAAREALADLMLRLQLVRREKRGLELR) adopt a coiled-coil conformation. Residues 540–583 (AGGANSSGGHSSGGGSSGDEEEWYQGLPAVPGGTSGIDGGQVGR) are disordered. Positions 572–581 (GTSGIDGGQV) are enriched in gly residues. Residues 596–681 (ASLTRTLDLQ…QAEEVAVLEA (86 aa)) are a coiled coil.

It belongs to the MCC family. As to quaternary structure, interacts via its C-terminus with the first PDZ domain of USH1C. Highest level of expression in heart, and moderate to low expression in skeletal muscle, kidney, liver, small intestine, placenta and lung.

The protein is Harmonin-binding protein USHBP1 of Homo sapiens (Human).